The following is an 852-amino-acid chain: Potassium voltage-gated channel subfamily KQT member 2 (852 aa).

Residues 1–90 (MVQKSRNGGV…LYNVLERPRG (90 aa)) lie on the Cytoplasmic side of the membrane. S52 is subject to Phosphoserine; by PKA. Residues 91–113 (WAFIYHAYVFLLVFSCLVLSVFS) traverse the membrane as a helical segment. The Extracellular portion of the chain corresponds to 114-123 (TIKEYEKSSE). Residues 124–145 (GALYILEIVTIVVFGVEYFVRI) traverse the membrane as a helical segment. The Cytoplasmic segment spans residues 146–163 (WAAGCCCRYRGWRGRLKF). A helical membrane pass occupies residues 164 to 183 (ARKPFCVIDIMVLIASIAVL). At 184–196 (AAGSQGNVFATSA) the chain is on the extracellular side. Residues 197-215 (LRSLRFLQILRMIRMDRRG) form a helical; Voltage-sensor membrane-spanning segment. R214 provides a ligand contact to a 1,2-diacyl-sn-glycero-3-phospho-(1D-myo-inositol-4,5-bisphosphate). Residues 216–227 (GTWKLLGSVVYA) are Cytoplasmic-facing. A mediates interaction with SLC5A3 region spans residues 222 to 323 (GSVVYAHSKE…SGFALKVQEQ (102 aa)). A helical transmembrane segment spans residues 228 to 253 (HSKELVTAWYIGFLCLILASFLVYLA). Residue K230 coordinates a 1,2-diacyl-sn-glycero-3-phospho-(1D-myo-inositol-4,5-bisphosphate). Over 254–263 (EKGENDHFDT) the chain is Extracellular. Positions 264 to 276 (YADALWWGLITLT) form an intramembrane region, pore-forming. Positions 277–282 (TIGYGD) match the Selectivity filter motif. At 277-287 (TIGYGDKYPQT) the chain is on the extracellular side. The helical transmembrane segment at 288–314 (WNGRLLAATFTLIGVSFFALPAGILGS) threads the bilayer. Over 315 to 852 (GFALKVQEQH…GDVAWAGPRK (538 aa)) the chain is Cytoplasmic. The tract at residues 317 to 522 (ALKVQEQHRQ…EDLTPGLKVS (206 aa)) is mediates interaction with calmodulin. Residue K327 coordinates a 1,2-diacyl-sn-glycero-3-phospho-(1D-myo-inositol-4,5-bisphosphate). Residues 404-469 (TFRKEPQPEP…SKVPKSWSFG (66 aa)) form a disordered region. Polar residues predominate over residues 440-457 (PQAQTVRRSPSADQSLDD). Phosphoserine occurs at positions 448, 450, 454, 458, 460, and 489. 3 disordered regions span residues 579–601 (GPTI…EDPS), 643–662 (GAKE…SRDH), and 672–718 (IVRS…DHGS). Residues 583-592 (TDKDRTKGPA) show a composition bias toward basic and acidic residues. S655 is subject to Phosphoserine. S781 and S783 each carry phosphoserine. Positions 818-852 (ESDTDSDLCTPCGPPPRSATGEGPFGDVAWAGPRK) are disordered.

This sequence belongs to the potassium channel family. KQT (TC 1.A.1.15) subfamily. Kv7.2/KCNQ2 sub-subfamily. As to quaternary structure, heterotetramer with KCNQ3; forms heterotetrameric M-channel responsible for the M-current. Homotetrameric; forms a functional homotetrameric channel resulting in the expression of a small M-current. Interacts with calmodulin; the interaction is calcium-independent, constitutive and participates in the proper assembly of a functional M-channel. May associate with KCNE2. Interacts with IQCJ-SCHIP1. Interacts (via the pore module) with SLC5A3/SMIT1; forms a coregulatory complex that alters ion selectivity, voltage dependence and gating kinetics of the channel. Interacts with AKAP5; the interaction may help KCNQ2 channel complex to retain calcium-bound calmodulin. In terms of processing, KCNQ2/KCNQ3 heteromeric current can be increased by intracellular cyclic AMP, an effect that depends on phosphorylation of Ser-52 in the N-terminal region. Post-translationally, KCNQ2/KCNQ3 are ubiquitinated by NEDD4L. Ubiquitination leads to protein degradation. Degradation induced by NEDD4L is inhibited by USP36. Expressed in brain and sympathetic ganglia. In brain, expressed in cortex, hippocampus, and cerebellum. In sympathetic ganglia, expressed at lower levels in celiac ganglia and superior mesenteric ganglia than in superior cervical ganglia.

The protein resides in the cell membrane. It catalyses the reaction K(+)(in) = K(+)(out). It carries out the reaction Rb(+)(in) = Rb(+)(out). The enzyme catalyses Cs(+)(in) = Cs(+)(out). The catalysed reaction is Na(+)(in) = Na(+)(out). With respect to regulation, phosphatidylinositol-4,5-bisphosphate (PIP2) potentiates the activation of KCNQ channels by enhancing the electro-mechanical coupling of the voltage-sensing domain (VSD) and the pore-forming domain (PD). In the closed state of the channel, PIP2 is anchored at the S2-S3 loop; upon channel activation, PIP2 interacts with the S4-S5 linker and is involved in channel gating. Calcium suppresses KCNQ2 and KCNQ2-KCNQ3 channel currents, with calcium-bound calmodulin inducing a change in channel configuration which leads to the reduction of channel affinity for PIP2 and subsequent current suppression. In terms of biological role, pore-forming subunit of the voltage-gated potassium (Kv) M-channel which is responsible for the M-current, a key controller of neuronal excitability. M-channel is composed of pore-forming subunits KCNQ2 and KCNQ3 assembled as heterotetramers. The native M-current has a slowly activating and deactivating potassium conductance which plays a critical role in determining the subthreshold electrical excitability of neurons as well as the responsiveness to synaptic inputs. M-channel is selectively permeable in vitro to other cations besides potassium, in decreasing order of affinity K(+) &gt; Rb(+) &gt; Cs(+) &gt; Na(+). M-channel association with SLC5A3/SMIT1 alters channel ion selectivity, increasing Na(+) and Cs(+) permeation relative to K(+). Suppressed by activation of the muscarinic acetylcholine receptor CHRM1. This Rattus norvegicus (Rat) protein is Potassium voltage-gated channel subfamily KQT member 2.